The following is a 242-amino-acid chain: Probable transcriptional regulatory protein Cthe_2075 (242 aa).

Belongs to the TACO1 family.

It localises to the cytoplasm. This Acetivibrio thermocellus (strain ATCC 27405 / DSM 1237 / JCM 9322 / NBRC 103400 / NCIMB 10682 / NRRL B-4536 / VPI 7372) (Clostridium thermocellum) protein is Probable transcriptional regulatory protein Cthe_2075.